Here is a 38-residue protein sequence, read N- to C-terminus: uncharacterized protein (38 aa).

This is an uncharacterized protein from Treponema pallidum (strain Nichols).